A 353-amino-acid chain; its full sequence is Photosystem II protein D1 (353 aa).

At T2 the chain carries N-acetylthreonine. T2 carries the post-translational modification Phosphothreonine. 3 helical membrane-spanning segments follow: residues 29–46 (YIGW…TATS), 118–133 (HFLL…EWEL), and 142–156 (WIAV…AATA). H118 contacts chlorophyll a. Y126 is a pheophytin a binding site. [CaMn4O5] cluster-binding residues include D170 and E189. Residues 197–218 (FHMLGVAGVFGGSLFSAMHGSL) form a helical membrane-spanning segment. Residue H198 coordinates chlorophyll a. Residues H215 and 264-265 (SF) each bind a quinone. H215 contributes to the Fe cation binding site. A Fe cation-binding site is contributed by H272. The chain crosses the membrane as a helical span at residues 274 to 288 (FLAAWPVVGIWFTAL). [CaMn4O5] cluster contacts are provided by H332, E333, D342, and A344. Positions 345–353 (AVEAPSTNG) are excised as a propeptide.

This sequence belongs to the reaction center PufL/M/PsbA/D family. PSII is composed of 1 copy each of membrane proteins PsbA, PsbB, PsbC, PsbD, PsbE, PsbF, PsbH, PsbI, PsbJ, PsbK, PsbL, PsbM, PsbT, PsbX, PsbY, PsbZ, Psb30/Ycf12, at least 3 peripheral proteins of the oxygen-evolving complex and a large number of cofactors. It forms dimeric complexes. The D1/D2 heterodimer binds P680, chlorophylls that are the primary electron donor of PSII, and subsequent electron acceptors. It shares a non-heme iron and each subunit binds pheophytin, quinone, additional chlorophylls, carotenoids and lipids. D1 provides most of the ligands for the Mn4-Ca-O5 cluster of the oxygen-evolving complex (OEC). There is also a Cl(-1) ion associated with D1 and D2, which is required for oxygen evolution. The PSII complex binds additional chlorophylls, carotenoids and specific lipids. serves as cofactor. Tyr-161 forms a radical intermediate that is referred to as redox-active TyrZ, YZ or Y-Z. In terms of processing, C-terminally processed by CTPA; processing is essential to allow assembly of the oxygen-evolving complex and thus photosynthetic growth.

Its subcellular location is the plastid. It localises to the chloroplast thylakoid membrane. It carries out the reaction 2 a plastoquinone + 4 hnu + 2 H2O = 2 a plastoquinol + O2. Its function is as follows. Photosystem II (PSII) is a light-driven water:plastoquinone oxidoreductase that uses light energy to abstract electrons from H(2)O, generating O(2) and a proton gradient subsequently used for ATP formation. It consists of a core antenna complex that captures photons, and an electron transfer chain that converts photonic excitation into a charge separation. The D1/D2 (PsbA/PsbD) reaction center heterodimer binds P680, the primary electron donor of PSII as well as several subsequent electron acceptors. This chain is Photosystem II protein D1, found in Ceratophyllum demersum (Rigid hornwort).